Consider the following 191-residue polypeptide: Protein GrpE (191 aa).

Basic and acidic residues predominate over residues 1–19; that stretch reads MKDEHNQKHDHLSQKEPES. The segment at 1 to 44 is disordered; it reads MKDEHNQKHDHLSQKEPESYQKACACKEQQDEEMQEAGEKEGEI.

Belongs to the GrpE family. As to quaternary structure, homodimer.

It localises to the cytoplasm. Participates actively in the response to hyperosmotic and heat shock by preventing the aggregation of stress-denatured proteins, in association with DnaK and GrpE. It is the nucleotide exchange factor for DnaK and may function as a thermosensor. Unfolded proteins bind initially to DnaJ; upon interaction with the DnaJ-bound protein, DnaK hydrolyzes its bound ATP, resulting in the formation of a stable complex. GrpE releases ADP from DnaK; ATP binding to DnaK triggers the release of the substrate protein, thus completing the reaction cycle. Several rounds of ATP-dependent interactions between DnaJ, DnaK and GrpE are required for fully efficient folding. The sequence is that of Protein GrpE from Helicobacter pylori (strain G27).